The primary structure comprises 113 residues: MNTLDFLDKKSLRDDIPEFRPGDTLNVHVKVIEGSKERVQVFKGVVIRRQGGGVRETFTVRKVSFGVGVERTFPVHSPNLAQIEVVTRGDVRRAKLYYLRDLRGKAAKIKEKR.

The protein belongs to the bacterial ribosomal protein bL19 family.

Functionally, this protein is located at the 30S-50S ribosomal subunit interface and may play a role in the structure and function of the aminoacyl-tRNA binding site. The polypeptide is Large ribosomal subunit protein bL19 (Rhodococcus jostii (strain RHA1)).